The primary structure comprises 101 residues: Protein RnfH (101 aa).

The protein belongs to the UPF0125 (RnfH) family.

The sequence is that of Protein RnfH from Coxiella burnetii (strain CbuG_Q212) (Coxiella burnetii (strain Q212)).